A 273-amino-acid chain; its full sequence is Ribosomal RNA small subunit methyltransferase A (273 aa).

6 residues coordinate S-adenosyl-L-methionine: Asn-18, Leu-20, Gly-45, Glu-66, Asp-91, and Asn-113.

The protein belongs to the class I-like SAM-binding methyltransferase superfamily. rRNA adenine N(6)-methyltransferase family. RsmA subfamily.

The protein resides in the cytoplasm. It catalyses the reaction adenosine(1518)/adenosine(1519) in 16S rRNA + 4 S-adenosyl-L-methionine = N(6)-dimethyladenosine(1518)/N(6)-dimethyladenosine(1519) in 16S rRNA + 4 S-adenosyl-L-homocysteine + 4 H(+). In terms of biological role, specifically dimethylates two adjacent adenosines (A1518 and A1519) in the loop of a conserved hairpin near the 3'-end of 16S rRNA in the 30S particle. May play a critical role in biogenesis of 30S subunits. The protein is Ribosomal RNA small subunit methyltransferase A of Salmonella agona (strain SL483).